The sequence spans 82 residues: Small ribosomal subunit protein bS18 (82 aa).

The segment at 1–20 (MVDINQIPTRRPFHRRRKTC) is disordered.

The protein belongs to the bacterial ribosomal protein bS18 family. In terms of assembly, part of the 30S ribosomal subunit. Forms a tight heterodimer with protein bS6.

In terms of biological role, binds as a heterodimer with protein bS6 to the central domain of the 16S rRNA, where it helps stabilize the platform of the 30S subunit. This chain is Small ribosomal subunit protein bS18, found in Brucella anthropi (strain ATCC 49188 / DSM 6882 / CCUG 24695 / JCM 21032 / LMG 3331 / NBRC 15819 / NCTC 12168 / Alc 37) (Ochrobactrum anthropi).